The following is a 418-amino-acid chain: Tyrosine--tRNA ligase (418 aa).

An L-tyrosine-binding site is contributed by Tyr-34. The 'HIGH' region signature appears at Pro-39–His-48. Residues Tyr-169 and Gln-173 each coordinate L-tyrosine. The short motif at Lys-229–Ser-233 is the 'KMSKS' region element. Lys-232 serves as a coordination point for ATP. The 67-residue stretch at Leu-352 to Tyr-418 folds into the S4 RNA-binding domain.

This sequence belongs to the class-I aminoacyl-tRNA synthetase family. TyrS type 1 subfamily. Homodimer.

It is found in the cytoplasm. The catalysed reaction is tRNA(Tyr) + L-tyrosine + ATP = L-tyrosyl-tRNA(Tyr) + AMP + diphosphate + H(+). Catalyzes the attachment of tyrosine to tRNA(Tyr) in a two-step reaction: tyrosine is first activated by ATP to form Tyr-AMP and then transferred to the acceptor end of tRNA(Tyr). This is Tyrosine--tRNA ligase from Streptococcus pyogenes serotype M6 (strain ATCC BAA-946 / MGAS10394).